Here is a 285-residue protein sequence, read N- to C-terminus: UPF0014 membrane protein STAR2 (285 aa).

The next 7 membrane-spanning stretches (helical) occupy residues 30–50 (FLVG…AVAL), 64–84 (YAMA…QFIF), 88–108 (SAAW…YTAG), 119–139 (HIAA…LVAL), 148–168 (YIIP…GVTM), 203–225 (SLVI…ALPG), and 240–262 (AIQL…SILS).

It belongs to the UPF0014 family. Interacts with STAR2. Expressed in roots.

It localises to the membrane. Functionally, associates with STAR2 to form a functional transmembrane ABC transporter required for detoxification of aluminum (Al) in roots. Can specifically transport UDP-glucose. The polypeptide is UPF0014 membrane protein STAR2 (Oryza sativa subsp. japonica (Rice)).